Reading from the N-terminus, the 227-residue chain is Ribonuclease 3 (227 aa).

One can recognise an RNase III domain in the interval 7–132 (LTAFMDRLGY…VIAAVYLDGG (126 aa)). Glu45 lines the Mg(2+) pocket. Residue Asp49 is part of the active site. Residues Asp118 and Glu121 each coordinate Mg(2+). Glu121 is a catalytic residue. The DRBM domain occupies 157 to 226 (DAKTALQEWA…AKDLLAQLAG (70 aa)).

The protein belongs to the ribonuclease III family. As to quaternary structure, homodimer. It depends on Mg(2+) as a cofactor.

It is found in the cytoplasm. The enzyme catalyses Endonucleolytic cleavage to 5'-phosphomonoester.. Digests double-stranded RNA. Involved in the processing of primary rRNA transcript to yield the immediate precursors to the large and small rRNAs (23S and 16S). Processes some mRNAs, and tRNAs when they are encoded in the rRNA operon. Processes pre-crRNA and tracrRNA of type II CRISPR loci if present in the organism. This Jannaschia sp. (strain CCS1) protein is Ribonuclease 3.